Consider the following 715-residue polypeptide: Polyribonucleotide nucleotidyltransferase (715 aa).

The Mg(2+) site is built by aspartate 485 and aspartate 491. Positions 552-611 (PRIHTMKIDPKKIKDVIGKGGAVIRALTEETGTSIDIDDDGTVKIAATDNNAAKAVMARI) constitute a KH domain. The S1 motif domain maps to 621–689 (NAIYKGKVTR…RQNRIRLTMK (69 aa)). The segment at 695 to 715 (TPVAENVTEEAEVSSEQQAEI) is disordered.

The protein belongs to the polyribonucleotide nucleotidyltransferase family. Component of the RNA degradosome, which is a multiprotein complex involved in RNA processing and mRNA degradation. Mg(2+) serves as cofactor.

It localises to the cytoplasm. The catalysed reaction is RNA(n+1) + phosphate = RNA(n) + a ribonucleoside 5'-diphosphate. Functionally, involved in mRNA degradation. Catalyzes the phosphorolysis of single-stranded polyribonucleotides processively in the 3'- to 5'-direction. This is Polyribonucleotide nucleotidyltransferase from Actinobacillus pleuropneumoniae serotype 7 (strain AP76).